We begin with the raw amino-acid sequence, 229 residues long: Vitellogenin (229 aa).

A VWFD domain is found at 1 to 136; the sequence is IVMLKNDNVE…SWILAAESCR (136 aa). A glycan (N-linked (GlcNAc...) asparagine) is linked at N198.

In terms of tissue distribution, expressed in liver, ovary and, to a lesser extent, in muscle, intestine, skin, kidney and heart.

Its function is as follows. Precursor of the egg-yolk proteins that are sources of nutrients during early development of oviparous organisms. In terms of biological role, probably binds tetrodotoxin in the ovary. The protein is Vitellogenin of Takifugu pardalis (Panther puffer).